The primary structure comprises 122 residues: Large ribosomal subunit protein uL14 (122 aa).

This sequence belongs to the universal ribosomal protein uL14 family. As to quaternary structure, part of the 50S ribosomal subunit. Forms a cluster with proteins L3 and L19. In the 70S ribosome, L14 and L19 interact and together make contacts with the 16S rRNA in bridges B5 and B8.

Binds to 23S rRNA. Forms part of two intersubunit bridges in the 70S ribosome. The sequence is that of Large ribosomal subunit protein uL14 from Ureaplasma parvum serovar 3 (strain ATCC 27815 / 27 / NCTC 11736).